The following is a 758-amino-acid chain: Transmembrane E3 ubiquitin-protein ligase 1 (758 aa).

Positions 1 to 26 (MEIDGNTLVFIIVILFLFFSSPGGDG) are cleaved as a signal peptide. Residues 27–398 (VSSQYEFNQL…YELKIMSIRK (372 aa)) lie on the Lumenal side of the membrane. Residues 399–419 (HLLFGIALFAAQIYLLLTQMH) traverse the membrane as a helical segment. The Cytoplasmic segment spans residues 420–431 (HTNTPSMVNKIS). A helical transmembrane segment spans residues 432-452 (FYCFSMINLVDGSLATLYFVA). The Lumenal portion of the chain corresponds to 453–458 (ASVVPE). The chain crosses the membrane as a helical span at residues 459 to 479 (LYLPLVISAFSCFILASIFEI). Over 480-523 (RYLISIYASQVNEQNVGIINLLRGNTGTYDENRPRPAFIPDEGS) the chain is Cytoplasmic. A helical membrane pass occupies residues 524-544 (IGGSLYGRFFFMLIIFTFLIL). Residues 545 to 553 (SSTSWPRQL) are Lumenal-facing. Residues 554-574 (RMVFEYILIFILNSYWIPQIF) form a helical membrane-spanning segment. The Cytoplasmic portion of the chain corresponds to 575–602 (RNAVKGIPSRRERARSSIGGNRSQNKMP). The helical transmembrane segment at 603–623 (LLWSFVIGTTIIRSLPVVYVF) threads the bilayer. Residues 624-635 (TYSSNVFRHHKD) are Lumenal-facing. The chain crosses the membrane as a helical span at residues 636–656 (VHFVVFLSLWLLFQISILYSQ). Residues 657–758 (DVLGSRWFLP…PVCRSPLPPL (102 aa)) lie on the Cytoplasmic side of the membrane. Residues 699–752 (CAICMSDVPIYIEEIPETHKVDQHSYMVTPCNHVFHTSCLENWMNYKLQCPVCR) form an RING-type; atypical zinc finger.

Component of the DSC E3 ligase complexes composed of at least TUL1, DSC2, DSC3, UBX3, CDC48 as well as VLD1 for the vacuole-localized complex or GLD1 for the Golgi/endosome-localized complex. Interacts with UBC4.

It localises to the golgi apparatus membrane. The enzyme catalyses S-ubiquitinyl-[E2 ubiquitin-conjugating enzyme]-L-cysteine + [acceptor protein]-L-lysine = [E2 ubiquitin-conjugating enzyme]-L-cysteine + N(6)-ubiquitinyl-[acceptor protein]-L-lysine.. Its pathway is protein modification; protein ubiquitination. Catalytic component of the DSC E3 ubiquitin ligase complexes that tag proteins present in Golgi, endosome and vacuole membranes and function in protein homeostasis under non-stress conditions and support a role in protein quality control. Mediates ubiquitination of vacuolar proteins such as CPS1, PPN1, PEP12 and other proteins containing exposed hydrophilic residues within their transmembrane domains, leading to their sorting into internal vesicles in late endosomes. Targets also the unpalmitoylated endosomal SNARE TLG1 to the MVB pathway. This Saccharomyces cerevisiae (strain ATCC 204508 / S288c) (Baker's yeast) protein is Transmembrane E3 ubiquitin-protein ligase 1 (TUL1).